Consider the following 471-residue polypeptide: Tryptophanase (471 aa).

Residues Lys5, Lys115, and Lys156 each carry the N6-acetyllysine modification. Lys270 is modified (N6-(pyridoxal phosphate)lysine). Residue Lys450 is modified to N6-acetyllysine.

The protein belongs to the beta-eliminating lyase family. As to quaternary structure, homotetramer. Pyridoxal 5'-phosphate serves as cofactor.

It catalyses the reaction L-tryptophan + H2O = indole + pyruvate + NH4(+). It functions in the pathway amino-acid degradation; L-tryptophan degradation via pyruvate pathway; indole and pyruvate from L-tryptophan: step 1/1. This Escherichia coli (strain SMS-3-5 / SECEC) protein is Tryptophanase.